The primary structure comprises 61 residues: Small ribosomal subunit protein uS14 (61 aa).

Residues C24, C27, C40, and C43 each coordinate Zn(2+).

The protein belongs to the universal ribosomal protein uS14 family. Zinc-binding uS14 subfamily. In terms of assembly, part of the 30S ribosomal subunit. Contacts proteins S3 and S10. Requires Zn(2+) as cofactor.

Its function is as follows. Binds 16S rRNA, required for the assembly of 30S particles and may also be responsible for determining the conformation of the 16S rRNA at the A site. This chain is Small ribosomal subunit protein uS14, found in Campylobacter fetus subsp. fetus (strain 82-40).